A 158-amino-acid chain; its full sequence is Vasotocin-neurophysin VT 2 (158 aa).

The N-terminal stretch at 1-19 is a signal peptide; it reads MPHSTLLLCVIGLLAFSSA. A disulfide bridge connects residues Cys20 and Cys25. A Glycine amide modification is found at Gly28. 7 disulfides stabilise this stretch: Cys41/Cys85, Cys44/Cys58, Cys52/Cys75, Cys59/Cys65, Cys92/Cys105, Cys99/Cys117, and Cys106/Cys111.

The protein belongs to the vasopressin/oxytocin family. Post-translationally, seven disulfide bonds are present in neurophysin.

It localises to the secreted. Vasotocin is an antidiuretic hormone. The sequence is that of Vasotocin-neurophysin VT 2 from Oncorhynchus keta (Chum salmon).